The following is a 292-amino-acid chain: Small ribosomal subunit protein uS9m (292 aa).

Residues 273-292 (VERKKPGKRKARKMPTWVKR) form a disordered region.

This sequence belongs to the universal ribosomal protein uS9 family.

It localises to the mitochondrion. This chain is Small ribosomal subunit protein uS9m (MRPS9), found in Kluyveromyces marxianus (Yeast).